The following is a 271-amino-acid chain: S-adenosylmethionine decarboxylase proenzyme (271 aa).

The active-site Schiff-base intermediate with substrate; via pyruvic acid is Ser121. The residue at position 121 (Ser121) is a Pyruvic acid (Ser); by autocatalysis. His126 functions as the Proton acceptor; for processing activity in the catalytic mechanism. Catalysis depends on Cys149, which acts as the Proton donor; for catalytic activity.

It belongs to the prokaryotic AdoMetDC family. Type 2 subfamily. As to quaternary structure, heterooctamer of four alpha and four beta chains arranged as a tetramer of alpha/beta heterodimers. Pyruvate is required as a cofactor. Is synthesized initially as an inactive proenzyme. Formation of the active enzyme involves a self-maturation process in which the active site pyruvoyl group is generated from an internal serine residue via an autocatalytic post-translational modification. Two non-identical subunits are generated from the proenzyme in this reaction, and the pyruvate is formed at the N-terminus of the alpha chain, which is derived from the carboxyl end of the proenzyme. The post-translation cleavage follows an unusual pathway, termed non-hydrolytic serinolysis, in which the side chain hydroxyl group of the serine supplies its oxygen atom to form the C-terminus of the beta chain, while the remainder of the serine residue undergoes an oxidative deamination to produce ammonia and the pyruvoyl group blocking the N-terminus of the alpha chain.

The catalysed reaction is S-adenosyl-L-methionine + H(+) = S-adenosyl 3-(methylsulfanyl)propylamine + CO2. The protein operates within amine and polyamine biosynthesis; S-adenosylmethioninamine biosynthesis; S-adenosylmethioninamine from S-adenosyl-L-methionine: step 1/1. Its function is as follows. Catalyzes the decarboxylation of S-adenosylmethionine to S-adenosylmethioninamine (dcAdoMet), the propylamine donor required for the synthesis of the polyamines spermine and spermidine from the diamine putrescine. This is S-adenosylmethionine decarboxylase proenzyme from Clostridium perfringens (strain ATCC 13124 / DSM 756 / JCM 1290 / NCIMB 6125 / NCTC 8237 / Type A).